Here is a 329-residue protein sequence, read N- to C-terminus: Malate dehydrogenase (329 aa).

12 to 18 (GAAGQIG) contributes to the NAD(+) binding site. Residues R95 and R101 each contribute to the substrate site. Residues N108, Q115, and 132 to 134 (VGN) contribute to the NAD(+) site. N134 and R165 together coordinate substrate. Residue H190 is the Proton acceptor of the active site.

The protein belongs to the LDH/MDH superfamily. MDH type 2 family. Homodimer.

The catalysed reaction is (S)-malate + NAD(+) = oxaloacetate + NADH + H(+). Substrate inhibition is observed at high concentrations of oxaloacetate. Its function is as follows. Catalyzes the reversible oxidation of malate to oxaloacetate. Catalyzes the reduction of oxaloacetate more efficiently than the oxidation of malate. The chain is Malate dehydrogenase from Syntrophobacter fumaroxidans (strain DSM 10017 / MPOB).